A 560-amino-acid chain; its full sequence is Protein SINE1 (560 aa).

The residue at position 2 (Gly2) is an N-acetylglycine. The interval 7–287 (PILRQELANL…VRGAAYEAMM (281 aa)) is ARMADILLO-type fold. Positions 517–560 (KKKKKKMSYAKLVIAISFVVVALFATVILMVNQDDDVGYYTVPT) constitute a KASH domain. The chain crosses the membrane as a helical span at residues 528–548 (LVIAISFVVVALFATVILMVN). The Required for nuclear localization motif lies at 557-560 (TVPT).

Interacts with SUN1 and SUN2. Binds to F-actin. As to expression, preferentially expressed in guards cells, but also detected in root cells.

Its subcellular location is the nucleus membrane. Plays a role in nucleus positioning in guard cells. This chain is Protein SINE1, found in Arabidopsis thaliana (Mouse-ear cress).